The sequence spans 538 residues: Nucleobase-ascorbate transporter 7 (538 aa).

Gly residues predominate over residues 1 to 11; that stretch reads MAGGGGGGGGV. The disordered stretch occupies residues 1-20; the sequence is MAGGGGGGGGVAPPLKHDGL. The next 12 membrane-spanning stretches (helical) occupy residues 45–65, 81–101, 103–123, 143–163, 166–186, 191–211, 229–249, 295–315, 372–394, 398–420, 432–452, and 471–491; these read AILL…LIPT, MVQT…FFGT, LPAV…IILA, IQGA…SGLW, VVRL…GFGL, FPLL…LLLF, FAVI…TVGG, FAMM…YIVV, VVQI…AIFA, APVV…LSLL, FILG…NQYT, and INVP…FLDV.

It belongs to the nucleobase:cation symporter-2 (NCS2) (TC 2.A.40) family. As to expression, expressed exclusively in ovules.

Its subcellular location is the cell membrane. In Arabidopsis thaliana (Mouse-ear cress), this protein is Nucleobase-ascorbate transporter 7 (NAT7).